Consider the following 667-residue polypeptide: DNA ligase (667 aa).

NAD(+) contacts are provided by residues 32–36, 81–82, and glutamate 110; these read DSEYD and SL. Lysine 112 serves as the catalytic N6-AMP-lysine intermediate. Arginine 133, glutamate 167, lysine 283, and lysine 307 together coordinate NAD(+). Residues cysteine 401, cysteine 404, cysteine 419, and cysteine 424 each contribute to the Zn(2+) site. Residues 586–667 enclose the BRCT domain; the sequence is EGHPEFSGKT…FVDKQNELNS (82 aa).

Belongs to the NAD-dependent DNA ligase family. LigA subfamily. The cofactor is Mg(2+). Requires Mn(2+) as cofactor.

It catalyses the reaction NAD(+) + (deoxyribonucleotide)n-3'-hydroxyl + 5'-phospho-(deoxyribonucleotide)m = (deoxyribonucleotide)n+m + AMP + beta-nicotinamide D-nucleotide.. In terms of biological role, DNA ligase that catalyzes the formation of phosphodiester linkages between 5'-phosphoryl and 3'-hydroxyl groups in double-stranded DNA using NAD as a coenzyme and as the energy source for the reaction. It is essential for DNA replication and repair of damaged DNA. The sequence is that of DNA ligase from Staphylococcus aureus (strain Mu3 / ATCC 700698).